The sequence spans 507 residues: TOM1-like protein 2 (507 aa).

Residues 20 to 152 enclose the VHS domain; that stretch reads ATDGSLQSED…ELKRKGVEFP (133 aa). Position 160 is a phosphoserine (Ser-160). The disordered stretch occupies residues 162-210; that stretch reads IHTPQRSVPEVDPAATMPRSQSQQRTSAGSYSSPPPAPYSAPQAPALSV. The residue at position 164 (Thr-164) is a Phosphothreonine. One can recognise a GAT domain in the interval 219-307; it reads EQIARLRSEL…VFLRYERFER (89 aa). The Clathrin-binding signature appears at 329 to 334; it reads NLIDLG. Positions 467–507 are disordered; sequence RAKAAEMVPDLPSPPMEAPAPASNPSGRKKPERSEDALFAL. Basic and acidic residues predominate over residues 498-507; the sequence is ERSEDALFAL.

Belongs to the TOM1 family. Interacts with clathrin, SRC and TOLLIP. Interacts with MYO6. As to expression, ubiquitously expressed with higher expression in heart and skeletal muscle.

Functionally, acts as a MYO6/Myosin VI adapter protein that targets myosin VI to endocytic structures. May also play a role in recruiting clathrin to endosomes. May regulate growth factor-induced mitogenic signaling. The protein is TOM1-like protein 2 (TOM1L2) of Homo sapiens (Human).